A 323-amino-acid polypeptide reads, in one-letter code: MSSSLEQLKATGTTVVSDSGDFVSIGKYKPQDATTNPSLILAASKKAEYAKLIDVAIDYAKQKGGSIDQQVDDALDRLLVEFGKEILKIIPGKVSTEVDARYSFDTEASVNKALHLIELYGEQGISKDRILIKIAATWEGIKAAEILQRDHGINTNLTLMFSLVQAIGAAEAGAYLISPFVGRILDWFKASTKKEYSKEEDPGVQSVKTIFNYYKKYGYNTIVMGASFRNTGEITELAGCDYLTISPNLLEDLLNSNEPVPKKLDASQAASLDIEKKSYINDEALFRFDFNEDQMAVEKLREGISKFAADAVTLKSILKEKLA.

Lys-133 acts as the Schiff-base intermediate with substrate in catalysis.

It belongs to the transaldolase family. Type 1 subfamily. As to quaternary structure, monomer.

It catalyses the reaction D-sedoheptulose 7-phosphate + D-glyceraldehyde 3-phosphate = D-erythrose 4-phosphate + beta-D-fructose 6-phosphate. It participates in carbohydrate degradation; pentose phosphate pathway; D-glyceraldehyde 3-phosphate and beta-D-fructose 6-phosphate from D-ribose 5-phosphate and D-xylulose 5-phosphate (non-oxidative stage): step 2/3. Important for the balance of metabolites in the pentose-phosphate pathway. Involved in xylose fermentation to ethanol. The polypeptide is Transaldolase (Gibberella intermedia (Bulb rot disease fungus)).